The chain runs to 311 residues: Putative dihydroorotate dehydrogenase A (fumarate) (311 aa).

Substrate contacts are provided by residues K45, 69 to 73 (NSMGL), and N128. 45–46 (KT) lines the FMN pocket. N128 is an FMN binding site. Catalysis depends on C131, which acts as the Nucleophile. FMN-binding residues include K165 and V193. 194–195 (NS) contributes to the substrate binding site. FMN is bound by residues G220, 248 to 249 (GG), and 270 to 271 (GT).

It belongs to the dihydroorotate dehydrogenase family. Type 1 subfamily. In terms of assembly, homodimer. Requires FMN as cofactor.

The protein resides in the cytoplasm. The catalysed reaction is (S)-dihydroorotate + fumarate = orotate + succinate. The protein operates within pyrimidine metabolism; UMP biosynthesis via de novo pathway. Its function is as follows. Catalyzes the conversion of dihydroorotate to orotate with fumarate as the electron acceptor. The polypeptide is Putative dihydroorotate dehydrogenase A (fumarate) (pyrD) (Streptococcus pyogenes serotype M18 (strain MGAS8232)).